Here is a 449-residue protein sequence, read N- to C-terminus: Tubulin alpha-1C chain (449 aa).

Residues 1 to 4 (MREC) carry the MREC motif motif. Q11 contacts GTP. The residue at position 40 (K40) is an N6-acetyllysine. The GTP site is built by E71, S140, G144, T145, T179, N206, and N228. E71 provides a ligand contact to Mg(2+). Residue E254 is part of the active site. At Y282 the chain carries 3'-nitrotyrosine. Y432 carries the phosphotyrosine modification. At S439 the chain carries Phosphoserine. A 3'-nitrotyrosine modification is found at Y449.

This sequence belongs to the tubulin family. In terms of assembly, dimer of alpha and beta chains. A typical microtubule is a hollow water-filled tube with an outer diameter of 25 nm and an inner diameter of 15 nM. Alpha-beta heterodimers associate head-to-tail to form protofilaments running lengthwise along the microtubule wall with the beta-tubulin subunit facing the microtubule plus end conferring a structural polarity. Microtubules usually have 13 protofilaments but different protofilament numbers can be found in some organisms and specialized cells. Mg(2+) serves as cofactor. Post-translationally, some glutamate residues at the C-terminus are polyglycylated, resulting in polyglycine chains on the gamma-carboxyl group. Glycylation is mainly limited to tubulin incorporated into axonemes (cilia and flagella) whereas glutamylation is prevalent in neuronal cells, centrioles, axonemes, and the mitotic spindle. Both modifications can coexist on the same protein on adjacent residues, and lowering polyglycylation levels increases polyglutamylation, and reciprocally. Cilia and flagella glycylation is required for their stability and maintenance. Flagella glycylation controls sperm motility. Some glutamate residues at the C-terminus are polyglutamylated, resulting in polyglutamate chains on the gamma-carboxyl group. Polyglutamylation plays a key role in microtubule severing by spastin (SPAST). SPAST preferentially recognizes and acts on microtubules decorated with short polyglutamate tails: severing activity by SPAST increases as the number of glutamates per tubulin rises from one to eight, but decreases beyond this glutamylation threshold. Glutamylation is also involved in cilia motility. In terms of processing, acetylation of alpha chains at Lys-40 is located inside the microtubule lumen. This modification has been correlated with increased microtubule stability, intracellular transport and ciliary assembly. Post-translationally, methylation of alpha chains at Lys-40 is found in mitotic microtubules and is required for normal mitosis and cytokinesis contributing to genomic stability. Nitration of Tyr-449 is irreversible and interferes with normal dynein intracellular distribution. In terms of processing, undergoes a tyrosination/detyrosination cycle, the cyclic removal and re-addition of a C-terminal tyrosine residue by the enzymes tubulin tyrosine carboxypeptidase (MATCAP1, VASH1 or VASH2) and tubulin tyrosine ligase (TTL), respectively. Post-translationally, tyrosination promotes microtubule interaction with CAP-Gly domain-containing proteins such as CLIP1, CLIP2 and DCTN1. Tyrosination regulates the initiation of dynein-dynactin motility via interaction with DCTN1, which brings the dynein-dynactin complex into contact with microtubules. In neurons, tyrosinated tubulins mediate the initiation of retrograde vesicle transport. Detyrosination is involved in metaphase plate congression by guiding chromosomes during mitosis: detyrosination promotes interaction with CENPE, promoting pole-proximal transport of chromosomes toward the equator. Detyrosination increases microtubules-dependent mechanotransduction in dystrophic cardiac and skeletal muscle. In cardiomyocytes, detyrosinated microtubules are required to resist to contractile compression during contraction: detyrosination promotes association with desmin (DES) at force-generating sarcomeres, leading to buckled microtubules and mechanical resistance to contraction. Minor alpha-tubulin expressed in all tissues.

The protein localises to the cytoplasm. It localises to the cytoskeleton. The enzyme catalyses GTP + H2O = GDP + phosphate + H(+). In terms of biological role, tubulin is the major constituent of microtubules, a cylinder consisting of laterally associated linear protofilaments composed of alpha- and beta-tubulin heterodimers. Microtubules grow by the addition of GTP-tubulin dimers to the microtubule end, where a stabilizing cap forms. Below the cap, tubulin dimers are in GDP-bound state, owing to GTPase activity of alpha-tubulin. This Mus musculus (Mouse) protein is Tubulin alpha-1C chain (Tuba1c).